The primary structure comprises 157 residues: 3-hydroxyacyl-[acyl-carrier-protein] dehydratase FabZ (157 aa).

The active site involves His58.

This sequence belongs to the thioester dehydratase family. FabZ subfamily.

Its subcellular location is the cytoplasm. It catalyses the reaction a (3R)-hydroxyacyl-[ACP] = a (2E)-enoyl-[ACP] + H2O. In terms of biological role, involved in unsaturated fatty acids biosynthesis. Catalyzes the dehydration of short chain beta-hydroxyacyl-ACPs and long chain saturated and unsaturated beta-hydroxyacyl-ACPs. This Brucella melitensis biotype 2 (strain ATCC 23457) protein is 3-hydroxyacyl-[acyl-carrier-protein] dehydratase FabZ.